We begin with the raw amino-acid sequence, 150 residues long: Deoxyuridine 5'-triphosphate nucleotidohydrolase (150 aa).

Substrate contacts are provided by residues 69-71 (RSG), Asn-82, 86-88 (TID), and Lys-96.

This sequence belongs to the dUTPase family. Mg(2+) is required as a cofactor.

It carries out the reaction dUTP + H2O = dUMP + diphosphate + H(+). Its pathway is pyrimidine metabolism; dUMP biosynthesis; dUMP from dCTP (dUTP route): step 2/2. In terms of biological role, this enzyme is involved in nucleotide metabolism: it produces dUMP, the immediate precursor of thymidine nucleotides and it decreases the intracellular concentration of dUTP so that uracil cannot be incorporated into DNA. The protein is Deoxyuridine 5'-triphosphate nucleotidohydrolase of Aquifex aeolicus (strain VF5).